A 157-amino-acid chain; its full sequence is Peptide methionine sulfoxide reductase MsrA (157 aa).

Residue Cys13 is part of the active site.

Belongs to the MsrA Met sulfoxide reductase family.

It catalyses the reaction L-methionyl-[protein] + [thioredoxin]-disulfide + H2O = L-methionyl-(S)-S-oxide-[protein] + [thioredoxin]-dithiol. It carries out the reaction [thioredoxin]-disulfide + L-methionine + H2O = L-methionine (S)-S-oxide + [thioredoxin]-dithiol. Functionally, has an important function as a repair enzyme for proteins that have been inactivated by oxidation. Catalyzes the reversible oxidation-reduction of methionine sulfoxide in proteins to methionine. The sequence is that of Peptide methionine sulfoxide reductase MsrA from Methanococcus maripaludis (strain C6 / ATCC BAA-1332).